We begin with the raw amino-acid sequence, 160 residues long: Putative control protein C.MjaVP (160 aa).

Functionally, may be involved in control of expression of the type II restriction enzyme MjaV and/or its methyltransferase M.MjaV. This is Putative control protein C.MjaVP from Methanocaldococcus jannaschii (strain ATCC 43067 / DSM 2661 / JAL-1 / JCM 10045 / NBRC 100440) (Methanococcus jannaschii).